Reading from the N-terminus, the 382-residue chain is Alanine racemase 1 (382 aa).

Catalysis depends on K39, which acts as the Proton acceptor; specific for D-alanine. Position 39 is an N6-(pyridoxal phosphate)lysine (K39). Substrate is bound at residue R138. Y265 serves as the catalytic Proton acceptor; specific for L-alanine. Position 312 (M312) interacts with substrate.

It belongs to the alanine racemase family. Requires pyridoxal 5'-phosphate as cofactor.

The enzyme catalyses L-alanine = D-alanine. Its pathway is amino-acid biosynthesis; D-alanine biosynthesis; D-alanine from L-alanine: step 1/1. Its function is as follows. Catalyzes the interconversion of L-alanine and D-alanine. May also act on other amino acids. The chain is Alanine racemase 1 (alr1) from Staphylococcus aureus (strain N315).